Reading from the N-terminus, the 159-residue chain is Ribosomal RNA large subunit methyltransferase H (159 aa).

S-adenosyl-L-methionine contacts are provided by residues L76, G108, and 127 to 132 (FGLLTL).

The protein belongs to the RNA methyltransferase RlmH family. In terms of assembly, homodimer.

The protein localises to the cytoplasm. The enzyme catalyses pseudouridine(1915) in 23S rRNA + S-adenosyl-L-methionine = N(3)-methylpseudouridine(1915) in 23S rRNA + S-adenosyl-L-homocysteine + H(+). In terms of biological role, specifically methylates the pseudouridine at position 1915 (m3Psi1915) in 23S rRNA. The sequence is that of Ribosomal RNA large subunit methyltransferase H from Streptococcus equi subsp. zooepidemicus (strain H70).